The following is an 897-amino-acid chain: Translation initiation factor IF-2 (897 aa).

Residues 52–310 (EHGSAPDKLT…LLQQGFQKPA (259 aa)) form a disordered region. The span at 68-82 (STLNVPGTGGKSKSV) shows a compositional bias: polar residues. 2 stretches are compositionally biased toward basic and acidic residues: residues 85–159 (EVRK…KDKV) and 166–217 (EMTK…ENEK). The span at 256 to 272 (GRTRTASKTARPQKKGN) shows a compositional bias: basic residues. Over residues 273–286 (KHAESKADREEARA) the composition is skewed to basic and acidic residues. The tr-type G domain maps to 396–565 (PRAPVVTIMG…LLQAEVLELK (170 aa)). Positions 405-412 (GHVDHGKT) are G1. GTP is bound at residue 405 to 412 (GHVDHGKT). The G2 stretch occupies residues 430 to 434 (GITQH). Positions 451–454 (DTPG) are G3. Residues 451–455 (DTPGH) and 505–508 (NKID) contribute to the GTP site. The interval 505 to 508 (NKID) is G4. The interval 541 to 543 (SAK) is G5.

Belongs to the TRAFAC class translation factor GTPase superfamily. Classic translation factor GTPase family. IF-2 subfamily.

The protein localises to the cytoplasm. One of the essential components for the initiation of protein synthesis. Protects formylmethionyl-tRNA from spontaneous hydrolysis and promotes its binding to the 30S ribosomal subunits. Also involved in the hydrolysis of GTP during the formation of the 70S ribosomal complex. This chain is Translation initiation factor IF-2 (infB), found in Enterobacter cloacae.